Consider the following 235-residue polypeptide: Uridylate kinase (235 aa).

9–12 (KLSG) is an ATP binding site. The involved in allosteric activation by GTP stretch occupies residues 17–22 (GNQGYG). Residue Gly-51 participates in UMP binding. ATP contacts are provided by Gly-52 and Arg-56. UMP is bound by residues Asp-71 and 132–139 (CGNPFFTT). Residues Thr-159, Tyr-165, and Asp-168 each contribute to the ATP site.

The protein belongs to the UMP kinase family. In terms of assembly, homohexamer.

The protein localises to the cytoplasm. It carries out the reaction UMP + ATP = UDP + ADP. Its pathway is pyrimidine metabolism; CTP biosynthesis via de novo pathway; UDP from UMP (UMPK route): step 1/1. Its activity is regulated as follows. Allosterically activated by GTP. Inhibited by UTP. Catalyzes the reversible phosphorylation of UMP to UDP. The sequence is that of Uridylate kinase from Synechococcus sp. (strain CC9311).